A 251-amino-acid chain; its full sequence is Flap endonuclease Xni (251 aa).

Asp-104 contributes to the Mg(2+) binding site. Residues 160 to 249 enclose the 5'-3' exonuclease domain; the sequence is VLPRQLPDYW…IDGNLQQLRL (90 aa). Leu-171, Ala-172, Pro-180, Val-182, and Ile-185 together coordinate K(+). The interaction with DNA stretch occupies residues 184–189; it reads GIGPKS.

The protein belongs to the Xni family. The cofactor is Mg(2+). It depends on K(+) as a cofactor.

Has flap endonuclease activity. During DNA replication, flap endonucleases cleave the 5'-overhanging flap structure that is generated by displacement synthesis when DNA polymerase encounters the 5'-end of a downstream Okazaki fragment. The chain is Flap endonuclease Xni from Salmonella choleraesuis (strain SC-B67).